The primary structure comprises 204 residues: Methylthioribulose-1-phosphate dehydratase (204 aa).

H94 and H96 together coordinate Zn(2+).

Belongs to the aldolase class II family. MtnB subfamily. The cofactor is Zn(2+).

The catalysed reaction is 5-(methylsulfanyl)-D-ribulose 1-phosphate = 5-methylsulfanyl-2,3-dioxopentyl phosphate + H2O. The protein operates within amino-acid biosynthesis; L-methionine biosynthesis via salvage pathway; L-methionine from S-methyl-5-thio-alpha-D-ribose 1-phosphate: step 2/6. Catalyzes the dehydration of methylthioribulose-1-phosphate (MTRu-1-P) into 2,3-diketo-5-methylthiopentyl-1-phosphate (DK-MTP-1-P). The sequence is that of Methylthioribulose-1-phosphate dehydratase from Pseudomonas syringae pv. syringae (strain B728a).